Here is a 426-residue protein sequence, read N- to C-terminus: Proline--tRNA ligase (426 aa).

The protein belongs to the class-II aminoacyl-tRNA synthetase family. ProS type 2 subfamily. As to quaternary structure, homodimer.

The protein resides in the cytoplasm. The enzyme catalyses tRNA(Pro) + L-proline + ATP = L-prolyl-tRNA(Pro) + AMP + diphosphate. Functionally, catalyzes the attachment of proline to tRNA(Pro) in a two-step reaction: proline is first activated by ATP to form Pro-AMP and then transferred to the acceptor end of tRNA(Pro). The polypeptide is Proline--tRNA ligase (Rickettsia africae (strain ESF-5)).